Consider the following 365-residue polypeptide: D-alanine--D-alanine ligase (365 aa).

Positions 156–360 (KKLMAAEGLP…YAQLLDNLIE (205 aa)) constitute an ATP-grasp domain. 183–238 (KRELGLPVFVKPARGGSSIGISRVADWSEWDAALSLAREHDSKVIVEAEIVGVEVE) serves as a coordination point for ATP. 3 residues coordinate Mg(2+): D315, E327, and N329.

The protein belongs to the D-alanine--D-alanine ligase family. The cofactor is Mg(2+). Requires Mn(2+) as cofactor.

The protein localises to the cytoplasm. It catalyses the reaction 2 D-alanine + ATP = D-alanyl-D-alanine + ADP + phosphate + H(+). It participates in cell wall biogenesis; peptidoglycan biosynthesis. Its function is as follows. Cell wall formation. This Corynebacterium diphtheriae (strain ATCC 700971 / NCTC 13129 / Biotype gravis) protein is D-alanine--D-alanine ligase.